The primary structure comprises 526 residues: MLRFGIKTWKRSVLAIRRSSTAPHVQIISNLQKKLLNELYSLRRLVDDNSPATIRVGNVSLLLSKSNIRRRIALQALSSSAEDVACVKQITHALLAAPFMPESKELKYAMDHNGLNPLYISFGTNALFERNARYSTSHLFLPSDFLQVNNLEIIHLPPGTVDSDILASCHARYICSTSYLRMTSSDFTTADTLVLDIDPKLHSLLKNEKSIIPVSSSAALKATKALQDDPHNFQNYQNQWEQSGFQQLRTNMTPTSDLEICKRFLNYLCCSFSLTKAEKDLVRATEFSNSMLISIEKWAKYCDVDLQEFEKKLQKFWKNFGTLKLYSNIESLPASLKQLIKDEYLQKSKLELSFILGELSKNGDDKNNFELAMKDFGTFQNSRMSAVDQALQPLRRKTLYTTAFQGLGALGSLYLYFVSHFSLYNAFSVFSVCGVFGLYYLQSSYRSWKKEYWKELLEEGRKFERQLCRNVFGRSSFYVQQKTAAEKKEHISLIMKKLTKTLDLMKEFQLQSSFSDSPTASKKQLL.

The next 2 membrane-spanning stretches (helical) occupy residues threonine 398–valine 418 and phenylalanine 421–leucine 441.

The protein resides in the mitochondrion membrane. Functionally, required for correct meiotic chromosome segregation. Appears to also have role in sporulation. The protein is Meiotically up-regulated gene 99 protein, mitochondrial (mug99) of Schizosaccharomyces pombe (strain 972 / ATCC 24843) (Fission yeast).